The primary structure comprises 205 residues: Arginine exporter protein ArgO (205 aa).

Helical transmembrane passes span 1–21 (MLAVFLQGFALSAAMILPLGP), 37–57 (LMVASLCALSDIVLICGGIFG), 68–88 (LLALVTWGGVAFLLWYGWGAF), 112–132 (VVTMLAVTWLNPHVYLDTFVV), 147–167 (WFALGAVSASVVWFFALALLA), and 182–202 (IINTLVGVVMWGIALQLAWQG).

This sequence belongs to the LysE/ArgO transporter (TC 2.A.75) family.

It is found in the cell inner membrane. The enzyme catalyses L-arginine(in) = L-arginine(out). Its function is as follows. Involved in the export of arginine. Important to control the intracellular level of arginine and the correct balance between arginine and lysine. This chain is Arginine exporter protein ArgO, found in Serratia proteamaculans (strain 568).